A 169-amino-acid polypeptide reads, in one-letter code: Cell division inhibitor SulA (169 aa).

The ftsZ binding stretch occupies residues alanine 106–tyrosine 112. The segment at lysine 162–histidine 169 is lon protease binding.

The protein belongs to the SulA family. As to quaternary structure, interacts with FtsZ. Post-translationally, is rapidly cleaved and degraded by the Lon protease once DNA damage is repaired.

In terms of biological role, component of the SOS system and an inhibitor of cell division. Accumulation of SulA causes rapid cessation of cell division and the appearance of long, non-septate filaments. In the presence of GTP, binds a polymerization-competent form of FtsZ in a 1:1 ratio, thus inhibiting FtsZ polymerization and therefore preventing it from participating in the assembly of the Z ring. This mechanism prevents the premature segregation of damaged DNA to daughter cells during cell division. The sequence is that of Cell division inhibitor SulA from Salmonella arizonae (strain ATCC BAA-731 / CDC346-86 / RSK2980).